The chain runs to 1279 residues: ATP-dependent helicase/nuclease subunit A (1279 aa).

Residues 4-499 enclose the UvrD-like helicase ATP-binding domain; that stretch reads TKWTDEQRQA…VKLFKNFRSR (496 aa). An ATP-binding site is contributed by 25–32; the sequence is AGAGAGKT. Residues 526–853 form the UvrD-like helicase C-terminal domain; that stretch reads EEALKVGASY…RIMSIHKSKG (328 aa).

The protein belongs to the helicase family. AddA subfamily. Heterodimer of AddA and AddB/RexB. It depends on Mg(2+) as a cofactor.

The catalysed reaction is Couples ATP hydrolysis with the unwinding of duplex DNA by translocating in the 3'-5' direction.. It carries out the reaction ATP + H2O = ADP + phosphate + H(+). Functionally, the heterodimer acts as both an ATP-dependent DNA helicase and an ATP-dependent, dual-direction single-stranded exonuclease. Recognizes the chi site generating a DNA molecule suitable for the initiation of homologous recombination. The AddA nuclease domain is required for chi fragment generation; this subunit has the helicase and 3' -&gt; 5' nuclease activities. The protein is ATP-dependent helicase/nuclease subunit A of Clostridium botulinum (strain 657 / Type Ba4).